Consider the following 100-residue polypeptide: Small ribosomal subunit protein uS14c (100 aa).

The tract at residues 1–31 is disordered; the sequence is MARKSLIQREKKRQKLEQKYHSIRRSSKKEI.

Belongs to the universal ribosomal protein uS14 family. Part of the 30S ribosomal subunit.

Its subcellular location is the plastid. The protein localises to the chloroplast. Functionally, binds 16S rRNA, required for the assembly of 30S particles. This Nicotiana tomentosiformis (Tobacco) protein is Small ribosomal subunit protein uS14c.